We begin with the raw amino-acid sequence, 396 residues long: Inositol polyphosphate 1-phosphatase (396 aa).

A Li(+)-binding site is contributed by aspartate 54. Mg(2+) is bound at residue glutamate 79. A Li(+)-binding site is contributed by glutamate 80. Aspartate 153 and isoleucine 155 together coordinate Mg(2+). 9 residues coordinate 1D-myo-inositol 1,4-bisphosphate: aspartate 156, serine 157, threonine 158, serine 264, lysine 266, glycine 286, alanine 287, lysine 290, and threonine 308. Aspartate 313 serves as a coordination point for Mg(2+). Serine 314 is subject to Phosphoserine.

Belongs to the inositol monophosphatase superfamily. Monomer. It depends on Mg(2+) as a cofactor.

It carries out the reaction 1D-myo-inositol 1,4-bisphosphate + H2O = 1D-myo-inositol 4-phosphate + phosphate. The catalysed reaction is 1D-myo-inositol 1,3,4-trisphosphate + H2O = 1D-myo-inositol 3,4-bisphosphate + phosphate. It participates in signal transduction; phosphatidylinositol signaling pathway. Its activity is regulated as follows. Inhibited by Li(+). Its function is as follows. Mg(2+)-dependent phosphatase that catalyzes the hydrolysis of the 1-position phosphate from inositol 1,4-bisphosphate and inositol 1,3,4-trisphosphate and participates in inositol phosphate metabolism. The protein is Inositol polyphosphate 1-phosphatase of Mus musculus (Mouse).